Reading from the N-terminus, the 807-residue chain is Probable phosphoketolase (807 aa).

This sequence belongs to the XFP family. The cofactor is thiamine diphosphate.

The chain is Probable phosphoketolase from Mesorhizobium japonicum (strain LMG 29417 / CECT 9101 / MAFF 303099) (Mesorhizobium loti (strain MAFF 303099)).